A 329-amino-acid polypeptide reads, in one-letter code: Apolipoprotein E (329 aa).

An N-terminal signal peptide occupies residues 1–18 (MKVLWAALVVALLAGCWA). 8 tandem repeats follow at residues 92 to 113 (TLME…EQLG), 114 to 135 (PMAS…ARLR), 136 to 157 (SDME…AMLG), 158 to 179 (QSTE…KRVL), 180 to 201 (RDAE…EGAE), 202 to 223 (RSVS…TRHA), 224 to 245 (KVDA…QQLR), and 246 to 267 (GRLE…EQME). Residues 92–267 (TLMEETMKEI…HLDEVREQME (176 aa)) form an 8 X 22 AA approximate tandem repeats region. A Methionine sulfoxide modification is found at methionine 155. Serine 159 bears the Phosphoserine mark. An LDL and other lipoprotein receptors binding region spans residues 170-180 (HMRKLRKRVLR). 174 to 177 (LRKR) is a heparin binding site. Residues 222–302 (HAKVDALATQ…GWFEPLVEDM (81 aa)) are lipid-binding and lipoprotein association. Position 241 to 248 (241 to 248 (GQQLRGRL)) interacts with heparin. Residues 278–329 (NQMRQQAEPFQARLKGWFEPLVEDMQRQWAVLVEKVQAAVGTSPTTPPVETK) are homooligomerization. The segment at 290-302 (RLKGWFEPLVEDM) is specificity for association with VLDL.

The protein belongs to the apolipoprotein A1/A4/E family. In terms of assembly, homotetramer. May interact with ABCA1; functionally associated with ABCA1 in the biogenesis of HDLs. May interact with APP/A4 amyloid-beta peptide; the interaction is extremely stable in vitro but its physiological significance is unclear. May interact with MAPT. May interact with MAP2. In the cerebrospinal fluid, interacts with secreted SORL1. Interacts with PMEL; this allows the loading of PMEL luminal fragment on ILVs to induce fibril nucleation. In terms of processing, APOE exists as multiple glycosylated and sialylated glycoforms within cells and in plasma. The extent of glycosylation and sialylation are tissue and context specific. Glycated in plasma VLDL. Post-translationally, phosphorylated by FAM20C in the extracellular medium.

The protein resides in the secreted. It localises to the extracellular space. The protein localises to the extracellular matrix. It is found in the extracellular vesicle. Its subcellular location is the endosome. The protein resides in the multivesicular body. APOE is an apolipoprotein, a protein associating with lipid particles, that mainly functions in lipoprotein-mediated lipid transport between organs via the plasma and interstitial fluids. APOE is a core component of plasma lipoproteins and is involved in their production, conversion and clearance. Apolipoproteins are amphipathic molecules that interact both with lipids of the lipoprotein particle core and the aqueous environment of the plasma. As such, APOE associates with chylomicrons, chylomicron remnants, very low density lipoproteins (VLDL) and intermediate density lipoproteins (IDL) but shows a preferential binding to high-density lipoproteins (HDL). It also binds a wide range of cellular receptors including the LDL receptor/LDLR, the LDL receptor-related proteins LRP1, LRP2 and LRP8 and the very low-density lipoprotein receptor/VLDLR that mediate the cellular uptake of the APOE-containing lipoprotein particles. Finally, APOE also has a heparin-binding activity and binds heparan-sulfate proteoglycans on the surface of cells, a property that supports the capture and the receptor-mediated uptake of APOE-containing lipoproteins by cells. A main function of APOE is to mediate lipoprotein clearance through the uptake of chylomicrons, VLDLs, and HDLs by hepatocytes. APOE is also involved in the biosynthesis by the liver of VLDLs as well as their uptake by peripheral tissues ensuring the delivery of triglycerides and energy storage in muscle, heart and adipose tissues. By participating in the lipoprotein-mediated distribution of lipids among tissues, APOE plays a critical role in plasma and tissues lipid homeostasis. APOE is also involved in two steps of reverse cholesterol transport, the HDLs-mediated transport of cholesterol from peripheral tissues to the liver, and thereby plays an important role in cholesterol homeostasis. First, it is functionally associated with ABCA1 in the biogenesis of HDLs in tissues. Second, it is enriched in circulating HDLs and mediates their uptake by hepatocytes. APOE also plays an important role in lipid transport in the central nervous system, regulating neuron survival and sprouting. The protein is Apolipoprotein E (APOE) of Arctocephalus gazella (Antarctic fur seal).